The following is an 86-amino-acid chain: U22-theraphotoxin-Cg1a (86 aa).

A signal peptide spans 1–20 (MKVSVVLAITVLALLSVAYA). Residues 21–51 (SEFEEKELVKEVVRTIFLGKEDAALREETDR) constitute a propeptide that is removed on maturation. 3 cysteine pairs are disulfide-bonded: Cys-53–Cys-67, Cys-60–Cys-72, and Cys-66–Cys-79. Residue Phe-85 is modified to Phenylalanine amide.

The protein belongs to the neurotoxin 10 (Hwtx-1) family. 42 (Jztx-44) subfamily. In terms of tissue distribution, expressed by the venom gland.

The protein resides in the secreted. Functionally, probable ion channel inhibitor. The sequence is that of U22-theraphotoxin-Cg1a from Chilobrachys guangxiensis (Chinese earth tiger tarantula).